The sequence spans 1326 residues: Probable serine/threonine-protein kinase gdt8 (1326 aa).

Residues 1 to 22 (MINKILIKLITIIIFCFSFLFA) form the signal peptide. At 23-782 (EEDLIRTPPG…VDRNENLELK (760 aa)) the chain is on the extracellular side. 2 disordered regions span residues 419–467 (VDQN…GNQG) and 731–762 (EPPT…QTPI). Composition is skewed to low complexity over residues 422-460 (NNNN…NNNN) and 731-761 (EPPT…TQTP). A helical membrane pass occupies residues 783 to 803 (IALPICLSLALLIGIIIMICI). The Cytoplasmic segment spans residues 804-1326 (FKKVQSNSKL…TKEDKDLDEN (523 aa)). The segment at 833–858 (IVSQPPTVIEEKPQDNSKPDDQKLIE) is disordered. A compositionally biased stretch (basic and acidic residues) spans 841-858 (IEEKPQDNSKPDDQKLIE). Residues 1036 to 1292 (IKTEQLIASY…FSEISLHLEI (257 aa)) form the Protein kinase domain. ATP is bound by residues 1042–1050 (IASYLPSKV) and Lys-1065. The Proton acceptor role is filled by Asp-1158. The tract at residues 1301-1326 (MNESEESTSNHNTNSKTKEDKDLDEN) is disordered. Residues 1316 to 1326 (KTKEDKDLDEN) are compositionally biased toward basic and acidic residues.

This sequence in the N-terminal section; belongs to the GDT family. In the C-terminal section; belongs to the protein kinase superfamily. TKL Ser/Thr protein kinase family.

The protein resides in the membrane. It carries out the reaction L-seryl-[protein] + ATP = O-phospho-L-seryl-[protein] + ADP + H(+). The catalysed reaction is L-threonyl-[protein] + ATP = O-phospho-L-threonyl-[protein] + ADP + H(+). This is Probable serine/threonine-protein kinase gdt8 (gdt8) from Dictyostelium discoideum (Social amoeba).